The chain runs to 631 residues: Phosphomethylpyrimidine synthase (631 aa).

Substrate contacts are provided by residues asparagine 239, methionine 268, tyrosine 297, histidine 333, serine 353 to glycine 355, aspartate 394 to arginine 397, and glutamate 433. A Zn(2+)-binding site is contributed by histidine 437. Tyrosine 460 is a binding site for substrate. Histidine 501 contributes to the Zn(2+) binding site. The [4Fe-4S] cluster site is built by cysteine 581, cysteine 584, and cysteine 589.

Belongs to the ThiC family. Homodimer. [4Fe-4S] cluster is required as a cofactor.

It catalyses the reaction 5-amino-1-(5-phospho-beta-D-ribosyl)imidazole + S-adenosyl-L-methionine = 4-amino-2-methyl-5-(phosphooxymethyl)pyrimidine + CO + 5'-deoxyadenosine + formate + L-methionine + 3 H(+). Its pathway is cofactor biosynthesis; thiamine diphosphate biosynthesis. In terms of biological role, catalyzes the synthesis of the hydroxymethylpyrimidine phosphate (HMP-P) moiety of thiamine from aminoimidazole ribotide (AIR) in a radical S-adenosyl-L-methionine (SAM)-dependent reaction. The chain is Phosphomethylpyrimidine synthase from Shigella flexneri serotype 5b (strain 8401).